A 134-amino-acid polypeptide reads, in one-letter code: Small ribosomal subunit protein uS11 (134 aa).

It belongs to the universal ribosomal protein uS11 family. As to quaternary structure, part of the 30S ribosomal subunit. Interacts with proteins S7 and S18. Binds to IF-3.

Functionally, located on the platform of the 30S subunit, it bridges several disparate RNA helices of the 16S rRNA. Forms part of the Shine-Dalgarno cleft in the 70S ribosome. In Janthinobacterium sp. (strain Marseille) (Minibacterium massiliensis), this protein is Small ribosomal subunit protein uS11.